We begin with the raw amino-acid sequence, 396 residues long: Cell division protein DivIB (396 aa).

Disordered regions lie at residues 1 to 23 and 37 to 116; these read MSKD…SEWQ and EVAL…ATKE. The Cytoplasmic portion of the chain corresponds to 1–130; the sequence is MSKDKKNEDK…AKIPGIHILR (130 aa). 2 stretches are compositionally biased toward basic and acidic residues: residues 37–65 and 75–116; these read EVAL…KQDQ and ESAK…ATKE. A helical transmembrane segment spans residues 131 to 151; sequence AFTILFPSLLLLIVSAYLLSP. At 152–396 the chain is on the extracellular side; the sequence is YATMKDIRVE…NQTNQRSSRR (245 aa). The POTRA domain maps to 153 to 223; the sequence is ATMKDIRVEG…TKFTIKVKEY (71 aa). Basic and acidic residues predominate over residues 361-385; that stretch reads KAKQEAKEAEKKQEEEQKKQEEESN. Residues 361–396 are disordered; it reads KAKQEAKEAEKKQEEEQKKQEEESNRNQTNQRSSRR. The segment covering 386–396 has biased composition (low complexity); it reads RNQTNQRSSRR.

It belongs to the FtsQ/DivIB family. DivIB subfamily.

The protein localises to the cell membrane. Its function is as follows. Cell division protein that may be involved in stabilizing or promoting the assembly of the division complex. This Streptococcus pneumoniae (strain ATCC BAA-255 / R6) protein is Cell division protein DivIB.